A 267-amino-acid chain; its full sequence is MKRNFDSVKRLVIKIGTSSLVLPSGKINLEKIDQLAFVISSLHNKGIEVVLVSSGAMGFGLNVLDLEKRPAEVGKQQAVSSVGQVAMMSLYSQVFSHYQTKVSQLLLTRDVVEYSESLANAINAFESLFELGVVPIVNENDAVSVDEMDHATKFGDNDRLSAIVAKVVGADLLIMLSDIDGLFDKNPNVYEDATLRSYVPEITEEILASAGGAGSKFGTGGMMSKIKSAQMVFENQSQMVLMNGENPRDILRVLEGAKIGTLFKQED.

ATP is bound at residue K14. The substrate site is built by S54, D141, and N157. ATP-binding positions include 177 to 178 (SD) and 219 to 225 (TGGMMSK).

It belongs to the glutamate 5-kinase family.

It is found in the cytoplasm. It catalyses the reaction L-glutamate + ATP = L-glutamyl 5-phosphate + ADP. It functions in the pathway amino-acid biosynthesis; L-proline biosynthesis; L-glutamate 5-semialdehyde from L-glutamate: step 1/2. Functionally, catalyzes the transfer of a phosphate group to glutamate to form L-glutamate 5-phosphate. The polypeptide is Glutamate 5-kinase (Streptococcus thermophilus).